Reading from the N-terminus, the 517-residue chain is Probable bifunctional methylthioribulose-1-phosphate dehydratase/enolase-phosphatase E1 1 (517 aa).

Residues 1-240 (MAAAALNGLK…AIKLYQLGLD (240 aa)) form a methylthioribulose-1-phosphate dehydratase region. Cys112 is a substrate binding site. 2 residues coordinate Zn(2+): His130 and His132. Glu155 functions as the Proton donor/acceptor; for methylthioribulose-1-phosphate dehydratase activity in the catalytic mechanism. His205 contributes to the Zn(2+) binding site. The segment at 278-517 (IVLDIEGTTT…FKTITSFSDI (240 aa)) is enolase-phosphatase E1. Asp281 and Glu283 together coordinate Mg(2+). Residues 416–417 (SS) and Lys450 each bind substrate. Asp476 contributes to the Mg(2+) binding site.

The protein in the N-terminal section; belongs to the aldolase class II family. MtnB subfamily. In the C-terminal section; belongs to the HAD-like hydrolase superfamily. MasA/MtnC family. It depends on Zn(2+) as a cofactor. Requires Mg(2+) as cofactor.

It catalyses the reaction 5-(methylsulfanyl)-D-ribulose 1-phosphate = 5-methylsulfanyl-2,3-dioxopentyl phosphate + H2O. The catalysed reaction is 5-methylsulfanyl-2,3-dioxopentyl phosphate + H2O = 1,2-dihydroxy-5-(methylsulfanyl)pent-1-en-3-one + phosphate. It participates in amino-acid biosynthesis; L-methionine biosynthesis via salvage pathway; L-methionine from S-methyl-5-thio-alpha-D-ribose 1-phosphate: step 2/6. The protein operates within amino-acid biosynthesis; L-methionine biosynthesis via salvage pathway; L-methionine from S-methyl-5-thio-alpha-D-ribose 1-phosphate: step 3/6. It functions in the pathway amino-acid biosynthesis; L-methionine biosynthesis via salvage pathway; L-methionine from S-methyl-5-thio-alpha-D-ribose 1-phosphate: step 4/6. The chain is Probable bifunctional methylthioribulose-1-phosphate dehydratase/enolase-phosphatase E1 1 from Vitis vinifera (Grape).